Here is a 443-residue protein sequence, read N- to C-terminus: Tol-Pal system protein TolB (443 aa).

Positions 1–31 (MTRLAKGKWRSTLGAMMALAVMVAAIPQARA) are cleaved as a signal peptide. Positions 423 to 432 (NERQISTPTE) are enriched in polar residues. The interval 423-443 (NERQISTPTEASDPAWSPLLP) is disordered.

Belongs to the TolB family. In terms of assembly, the Tol-Pal system is composed of five core proteins: the inner membrane proteins TolA, TolQ and TolR, the periplasmic protein TolB and the outer membrane protein Pal. They form a network linking the inner and outer membranes and the peptidoglycan layer.

It is found in the periplasm. Functionally, part of the Tol-Pal system, which plays a role in outer membrane invagination during cell division and is important for maintaining outer membrane integrity. This chain is Tol-Pal system protein TolB, found in Rhodospirillum rubrum (strain ATCC 11170 / ATH 1.1.1 / DSM 467 / LMG 4362 / NCIMB 8255 / S1).